The chain runs to 26 residues: IGTQIVXNXMKSIKNIQKITKAMKMV.

It belongs to the ATPase gamma chain family. In terms of assembly, F-type ATPases have 2 components, CF(1) - the catalytic core - and CF(0) - the membrane proton channel. CF(1) has five subunits: alpha(3), beta(3), gamma(1), delta(1), epsilon(1). CF(0) has three main subunits: a, b and c.

It localises to the mitochondrion. It is found in the mitochondrion inner membrane. Mitochondrial membrane ATP synthase (F(1)F(0) ATP synthase or Complex V) produces ATP from ADP in the presence of a proton gradient across the membrane which is generated by electron transport complexes of the respiratory chain. F-type ATPases consist of two structural domains, F(1) - containing the extramembraneous catalytic core, and F(0) - containing the membrane proton channel, linked together by a central stalk and a peripheral stalk. During catalysis, ATP synthesis in the catalytic domain of F(1) is coupled via a rotary mechanism of the central stalk subunits to proton translocation. Part of the complex F(1) domain and the central stalk which is part of the complex rotary element. The gamma subunit protrudes into the catalytic domain formed of alpha(3)beta(3). Rotation of the central stalk against the surrounding alpha(3)beta(3) subunits leads to hydrolysis of ATP in three separate catalytic sites on the beta subunits. The sequence is that of ATP synthase subunit gamma, mitochondrial (ATPC) from Spinacia oleracea (Spinach).